The primary structure comprises 621 residues: 1-deoxy-D-xylulose-5-phosphate synthase (621 aa).

Thiamine diphosphate is bound by residues His-80 and 121 to 123 (GHS). A Mg(2+)-binding site is contributed by Asp-152. Thiamine diphosphate is bound by residues 153–154 (GA), Asn-181, Tyr-288, and Glu-370. Residue Asn-181 coordinates Mg(2+).

The protein belongs to the transketolase family. DXPS subfamily. Homodimer. Mg(2+) is required as a cofactor. Thiamine diphosphate serves as cofactor.

The enzyme catalyses D-glyceraldehyde 3-phosphate + pyruvate + H(+) = 1-deoxy-D-xylulose 5-phosphate + CO2. Its pathway is metabolic intermediate biosynthesis; 1-deoxy-D-xylulose 5-phosphate biosynthesis; 1-deoxy-D-xylulose 5-phosphate from D-glyceraldehyde 3-phosphate and pyruvate: step 1/1. Catalyzes the acyloin condensation reaction between C atoms 2 and 3 of pyruvate and glyceraldehyde 3-phosphate to yield 1-deoxy-D-xylulose-5-phosphate (DXP). This Vibrio parahaemolyticus serotype O3:K6 (strain RIMD 2210633) protein is 1-deoxy-D-xylulose-5-phosphate synthase.